The following is a 205-amino-acid chain: Probable GTP-binding protein EngB (205 aa).

Residues 27 to 201 (EGMEIAFAGR…AAKLDSWFSS (175 aa)) form the EngB-type G domain. GTP contacts are provided by residues 35–42 (GRSNAGKS), 62–66 (GRTQL), 80–83 (DLPG), 147–150 (TKAD), and 180–182 (FSA). 2 residues coordinate Mg(2+): S42 and T64.

The protein belongs to the TRAFAC class TrmE-Era-EngA-EngB-Septin-like GTPase superfamily. EngB GTPase family. Mg(2+) is required as a cofactor.

In terms of biological role, necessary for normal cell division and for the maintenance of normal septation. The polypeptide is Probable GTP-binding protein EngB (Mannheimia succiniciproducens (strain KCTC 0769BP / MBEL55E)).